The sequence spans 289 residues: Epoxyqueuosine reductase (289 aa).

Aspartate 111 acts as the Proton donor in catalysis. One can recognise a 4Fe-4S ferredoxin-type domain in the interval 156 to 185 (QGDRPHSQHCGTCTRCLEACPTQAIVEPFV). 8 residues coordinate [4Fe-4S] cluster: cysteine 165, cysteine 168, cysteine 171, cysteine 175, cysteine 191, cysteine 219, cysteine 222, and cysteine 226.

The protein belongs to the QueG family. Monomer. Requires cob(II)alamin as cofactor. The cofactor is [4Fe-4S] cluster.

The protein localises to the cytoplasm. It carries out the reaction epoxyqueuosine(34) in tRNA + AH2 = queuosine(34) in tRNA + A + H2O. The protein operates within tRNA modification; tRNA-queuosine biosynthesis. Catalyzes the conversion of epoxyqueuosine (oQ) to queuosine (Q), which is a hypermodified base found in the wobble positions of tRNA(Asp), tRNA(Asn), tRNA(His) and tRNA(Tyr). In Synechocystis sp. (strain ATCC 27184 / PCC 6803 / Kazusa), this protein is Epoxyqueuosine reductase.